We begin with the raw amino-acid sequence, 313 residues long: Malate dehydrogenase (313 aa).

NAD(+) contacts are provided by residues 11–16 (GAGNIG) and D35. Substrate contacts are provided by R86 and R92. Residues N99 and 122-124 (ISN) each bind NAD(+). 2 residues coordinate substrate: N124 and R155. H179 functions as the Proton acceptor in the catalytic mechanism.

The protein belongs to the LDH/MDH superfamily. MDH type 3 family.

It catalyses the reaction (S)-malate + NAD(+) = oxaloacetate + NADH + H(+). Its function is as follows. Catalyzes the reversible oxidation of malate to oxaloacetate. The sequence is that of Malate dehydrogenase from Sorangium cellulosum (strain So ce56) (Polyangium cellulosum (strain So ce56)).